We begin with the raw amino-acid sequence, 1019 residues long: Outer capsid protein P3 (1019 aa).

The protein belongs to the phytoreovirus inner capsid protein P3 family. In terms of assembly, homodimer. Homomultimer.

Its subcellular location is the virion. It is found in the host cytoplasm. Capsid protein which self-assembles to form the inner icosahedral capsid with a T=2 symmetry, and consisting of 60 P3 dimers. In Alopecurus aequalis (Barnyard grass), this protein is Outer capsid protein P3.